The sequence spans 212 residues: Pyrrolidone-carboxylate peptidase (212 aa).

Active-site residues include glutamate 80, cysteine 143, and histidine 165.

Belongs to the peptidase C15 family. In terms of assembly, homotetramer.

It is found in the cytoplasm. The enzyme catalyses Release of an N-terminal pyroglutamyl group from a polypeptide, the second amino acid generally not being Pro.. Its function is as follows. Removes 5-oxoproline from various penultimate amino acid residues except L-proline. The chain is Pyrrolidone-carboxylate peptidase from Vibrio vulnificus (strain YJ016).